The sequence spans 124 residues: Small ribosomal subunit protein uS12 (124 aa).

3-methylthioaspartic acid is present on D89.

This sequence belongs to the universal ribosomal protein uS12 family. Part of the 30S ribosomal subunit. Contacts proteins S8 and S17. May interact with IF1 in the 30S initiation complex.

In terms of biological role, with S4 and S5 plays an important role in translational accuracy. Its function is as follows. Interacts with and stabilizes bases of the 16S rRNA that are involved in tRNA selection in the A site and with the mRNA backbone. Located at the interface of the 30S and 50S subunits, it traverses the body of the 30S subunit contacting proteins on the other side and probably holding the rRNA structure together. The combined cluster of proteins S8, S12 and S17 appears to hold together the shoulder and platform of the 30S subunit. This chain is Small ribosomal subunit protein uS12, found in Pectobacterium atrosepticum (strain SCRI 1043 / ATCC BAA-672) (Erwinia carotovora subsp. atroseptica).